We begin with the raw amino-acid sequence, 436 residues long: GTPase Der (436 aa).

2 EngA-type G domains span residues 4-167 (SVVA…PNES) and 176-351 (IYFS…ESHT). Residues 10-17 (GRPNVGKS), 57-61 (DTGGI), 119-122 (NKMD), 182-189 (GRPNVGKS), 229-233 (DTAGM), and 294-297 (NKWD) each bind GTP. One can recognise a KH-like domain in the interval 352 to 436 (KRIPTNVLND…PIKLFARRRQ (85 aa)).

This sequence belongs to the TRAFAC class TrmE-Era-EngA-EngB-Septin-like GTPase superfamily. EngA (Der) GTPase family. As to quaternary structure, associates with the 50S ribosomal subunit.

Functionally, GTPase that plays an essential role in the late steps of ribosome biogenesis. The sequence is that of GTPase Der from Oceanobacillus iheyensis (strain DSM 14371 / CIP 107618 / JCM 11309 / KCTC 3954 / HTE831).